The chain runs to 137 residues: Small ribosomal subunit protein uS9 (137 aa).

The protein belongs to the universal ribosomal protein uS9 family.

This chain is Small ribosomal subunit protein uS9, found in Picosynechococcus sp. (strain ATCC 27264 / PCC 7002 / PR-6) (Agmenellum quadruplicatum).